The sequence spans 363 residues: Dihydroorotate dehydrogenase (quinone) (363 aa).

FMN contacts are provided by residues A77–K81 and T101. Residue K81 coordinates substrate. N126–F130 provides a ligand contact to substrate. FMN is bound by residues S155 and N188. Substrate is bound at residue N188. The active-site Nucleophile is S191. N193 contributes to the substrate binding site. FMN contacts are provided by K234 and T262. N263 to T264 serves as a coordination point for substrate. FMN-binding positions include G287, G316, and Y337–T338.

Belongs to the dihydroorotate dehydrogenase family. Type 2 subfamily. Monomer. FMN is required as a cofactor.

The protein resides in the cell membrane. The enzyme catalyses (S)-dihydroorotate + a quinone = orotate + a quinol. It functions in the pathway pyrimidine metabolism; UMP biosynthesis via de novo pathway; orotate from (S)-dihydroorotate (quinone route): step 1/1. Catalyzes the conversion of dihydroorotate to orotate with quinone as electron acceptor. The sequence is that of Dihydroorotate dehydrogenase (quinone) from Chloroflexus aurantiacus (strain ATCC 29366 / DSM 635 / J-10-fl).